Consider the following 766-residue polypeptide: Ribonuclease Z, mitochondrial (766 aa).

Residues 1–25 constitute a mitochondrion transit peptide; that stretch reads MYLVKSAGSPIYRTLRTLTTSNLMA.

It belongs to the RNase Z family. In terms of assembly, homodimer. The cofactor is Zn(2+).

It is found in the nucleus. The protein localises to the mitochondrion. The catalysed reaction is Endonucleolytic cleavage of RNA, removing extra 3' nucleotides from tRNA precursor, generating 3' termini of tRNAs. A 3'-hydroxy group is left at the tRNA terminus and a 5'-phosphoryl group is left at the trailer molecule.. Zinc phosphodiesterase, which displays some tRNA 3'-processing endonuclease activity of nuclear and mitochondrial pre-tRNA. Probably involved in tRNA maturation, by removing a 3'-trailer from precursor tRNA. May participate in tRNA processing in the developing embryo. This is Ribonuclease Z, mitochondrial from Drosophila melanogaster (Fruit fly).